A 187-amino-acid chain; its full sequence is Ribosome maturation factor RimM (187 aa).

The region spanning 95–178 is the PRC barrel domain; the sequence is DEDEFFYADL…GLVEDKDESL (84 aa).

The protein belongs to the RimM family. In terms of assembly, binds ribosomal protein uS19.

It is found in the cytoplasm. Its function is as follows. An accessory protein needed during the final step in the assembly of 30S ribosomal subunit, possibly for assembly of the head region. Essential for efficient processing of 16S rRNA. May be needed both before and after RbfA during the maturation of 16S rRNA. It has affinity for free ribosomal 30S subunits but not for 70S ribosomes. The sequence is that of Ribosome maturation factor RimM from Sinorhizobium fredii (strain NBRC 101917 / NGR234).